A 276-amino-acid chain; its full sequence is ATP synthase subunit a (276 aa).

The next 6 membrane-spanning stretches (helical) occupy residues 27 to 47, 61 to 81, 120 to 140, 159 to 179, 225 to 245, and 246 to 266; these read ITMLAGLSVLNLFPLAALEVG, GQTFATSWFVILLLVIASLAA, LPFIGTLFLFIFVSNWSGALL, DINTTVALALLTSLAYFYAGL, LVVAVLVLLVPLLVPLPLMAL, and GLFTSAIQALVFATLAGAYIH.

This sequence belongs to the ATPase A chain family. As to quaternary structure, F-type ATPases have 2 components, CF(1) - the catalytic core - and CF(0) - the membrane proton channel. CF(1) has five subunits: alpha(3), beta(3), gamma(1), delta(1), epsilon(1). CF(0) has four main subunits: a, b, b' and c.

It localises to the cellular thylakoid membrane. Functionally, key component of the proton channel; it plays a direct role in the translocation of protons across the membrane. In Synechocystis sp. (strain ATCC 27184 / PCC 6803 / Kazusa), this protein is ATP synthase subunit a.